A 476-amino-acid polypeptide reads, in one-letter code: Bifunctional protein HldE (476 aa).

The ribokinase stretch occupies residues Met-1–Thr-318. Asn-195 to Glu-198 serves as a coordination point for ATP. The active site involves Asp-264. A cytidylyltransferase region spans residues Met-344–Gly-476.

This sequence in the N-terminal section; belongs to the carbohydrate kinase PfkB family. In the C-terminal section; belongs to the cytidylyltransferase family. As to quaternary structure, homodimer.

The catalysed reaction is D-glycero-beta-D-manno-heptose 7-phosphate + ATP = D-glycero-beta-D-manno-heptose 1,7-bisphosphate + ADP + H(+). It catalyses the reaction D-glycero-beta-D-manno-heptose 1-phosphate + ATP + H(+) = ADP-D-glycero-beta-D-manno-heptose + diphosphate. The protein operates within nucleotide-sugar biosynthesis; ADP-L-glycero-beta-D-manno-heptose biosynthesis; ADP-L-glycero-beta-D-manno-heptose from D-glycero-beta-D-manno-heptose 7-phosphate: step 1/4. It functions in the pathway nucleotide-sugar biosynthesis; ADP-L-glycero-beta-D-manno-heptose biosynthesis; ADP-L-glycero-beta-D-manno-heptose from D-glycero-beta-D-manno-heptose 7-phosphate: step 3/4. Its pathway is bacterial outer membrane biogenesis; LPS core biosynthesis. Its function is as follows. Catalyzes the phosphorylation of D-glycero-D-manno-heptose 7-phosphate at the C-1 position to selectively form D-glycero-beta-D-manno-heptose-1,7-bisphosphate. Functionally, catalyzes the ADP transfer from ATP to D-glycero-beta-D-manno-heptose 1-phosphate, yielding ADP-D-glycero-beta-D-manno-heptose. The polypeptide is Bifunctional protein HldE (Vibrio vulnificus (strain YJ016)).